Here is an 879-residue protein sequence, read N- to C-terminus: Alanine--tRNA ligase (879 aa).

Zn(2+) contacts are provided by histidine 566, histidine 570, cysteine 668, and histidine 672.

The protein belongs to the class-II aminoacyl-tRNA synthetase family. The cofactor is Zn(2+).

Its subcellular location is the cytoplasm. It carries out the reaction tRNA(Ala) + L-alanine + ATP = L-alanyl-tRNA(Ala) + AMP + diphosphate. Catalyzes the attachment of alanine to tRNA(Ala) in a two-step reaction: alanine is first activated by ATP to form Ala-AMP and then transferred to the acceptor end of tRNA(Ala). Also edits incorrectly charged Ser-tRNA(Ala) and Gly-tRNA(Ala) via its editing domain. In Clostridium novyi (strain NT), this protein is Alanine--tRNA ligase.